The primary structure comprises 238 residues: Putative tyrosine-protein phosphatase OCA1 (238 aa).

Residues 1–43 (MTSKVGEYEDVPEDESRLTEENVSVPEEEVEDEDEEEDDDDDH) form a disordered region. Threonine 2 is subject to N-acetylthreonine. Serine 24 carries the phosphoserine modification. Residues 26 to 42 (PEEEVEDEDEEEDDDDD) show a composition bias toward acidic residues. Positions 72–230 (NFCPVERYLY…LVKIDKNKAP (159 aa)) constitute a Tyrosine-protein phosphatase domain. The active-site Phosphocysteine intermediate is the cysteine 168.

Belongs to the protein-tyrosine phosphatase family.

The protein localises to the cytoplasm. It catalyses the reaction O-phospho-L-tyrosyl-[protein] + H2O = L-tyrosyl-[protein] + phosphate. Putative tyrosine-protein phosphatase required for protection against superoxide stress. Involved in cell-cycle delay in response to linoleic acid hydroperoxide (LoaOOH). The sequence is that of Putative tyrosine-protein phosphatase OCA1 (OCA1) from Saccharomyces cerevisiae (strain YJM789) (Baker's yeast).